A 275-amino-acid polypeptide reads, in one-letter code: Probable 2' cyclic ADP-D-ribose synthase TcpB (275 aa).

A compositionally biased stretch (basic and acidic residues) spans 17–32 (RLKADDSREMSKEKQA). The tract at residues 17-66 (RLKADDSREMSKEKQAQSKAHKAQQAISSAKSLSTQKSKMSELERATRDG) is disordered. Residues 39–48 (AQQAISSAKS) are compositionally biased toward low complexity. Residues 55–64 (KMSELERATR) show a composition bias toward basic and acidic residues. One can recognise a TIR domain in the interval 142–275 (EEYDFFISHA…EIAKELHSLI (134 aa)). Residues 151–152 (AS) and Lys-181 contribute to the NAD(+) site. Glu-217 is a catalytic residue.

Homodimer. Interacts with host TIRAP, and probably host MYD88. Interacts with host TLR4, abolishes the interaction of host TIRAP with TLR4.

It localises to the secreted. It is found in the host cell membrane. It carries out the reaction NAD(+) + H2O = ADP-D-ribose + nicotinamide + H(+). The catalysed reaction is NAD(+) = 2'cADPR + nicotinamide + H(+). Its function is as follows. Virulence factor that interferes with host Toll-like receptor 2 (TLR2) and TLR4 signaling, resulting in the reduction of dendritic cell maturation, inhibition of pro-inflammatory cytokine secretion and impaired NF-kappa-B activation in macrophages. Binds host lipids. Has NAD(+) hydrolase (NADase) activity, catalyzes cleavage of NAD(+) into ADP-D-ribose (ADPR) and nicotinamide, also generates a cyclization variant of cyclic ADPR (cADPR), termed v-cADPR (probably 2'cADPR). This Brucella melitensis biotype 2 (strain ATCC 23457) protein is Probable 2' cyclic ADP-D-ribose synthase TcpB (tcpB).